Consider the following 383-residue polypeptide: Soluble hydrogenase 42 kDa subunit (383 aa).

Lys194 bears the N6-(pyridoxal phosphate)lysine mark.

The protein belongs to the class-V pyridoxal-phosphate-dependent aminotransferase family. As to quaternary structure, heterodimer of a large and a small subunit. Pyridoxal 5'-phosphate serves as cofactor.

It is found in the cytoplasm. Its function is as follows. Soluble hydrogenase catalyzes both production and consumption of hydrogen from suitable artificial electron donors or acceptors. This subunit catalyzes the tritium-exchange activity. This Anabaena cylindrica protein is Soluble hydrogenase 42 kDa subunit.